A 302-amino-acid polypeptide reads, in one-letter code: Short-chain dehydrogenase/reductase 3 (302 aa).

4 helical membrane passes run 9 to 29 (LVVFPLQMIYLVVKAAVGLVL), 170 to 190 (IVCLNSVLALSAIPGAIDYCT), 195 to 215 (AFAFMESLTLGLLDCPGVSAT), and 253 to 273 (AVQLNQALLLLPWTMHALIIL). Ser-175 lines the substrate pocket. Tyr-188 serves as the catalytic Proton acceptor.

The protein belongs to the short-chain dehydrogenases/reductases (SDR) family. In terms of tissue distribution, in the retina, expressed in cone but not rod outer segments.

Its subcellular location is the membrane. The enzyme catalyses all-trans-retinol + NADP(+) = all-trans-retinal + NADPH + H(+). Its function is as follows. Catalyzes the reduction of all-trans-retinal to all-trans-retinol in the presence of NADPH. The protein is Short-chain dehydrogenase/reductase 3 (DHRS3) of Bos taurus (Bovine).